Consider the following 232-residue polypeptide: Phosphoglycolate phosphatase (232 aa).

Residue Asp13 is the Nucleophile of the active site. 3 residues coordinate Mg(2+): Asp13, Asp15, and Asp175.

This sequence belongs to the HAD-like hydrolase superfamily. CbbY/CbbZ/Gph/YieH family. In terms of assembly, monomer. Mg(2+) serves as cofactor. It depends on chloride as a cofactor.

It catalyses the reaction 2-phosphoglycolate + H2O = glycolate + phosphate. It participates in organic acid metabolism; glycolate biosynthesis; glycolate from 2-phosphoglycolate: step 1/1. In terms of biological role, specifically catalyzes the dephosphorylation of 2-phosphoglycolate. Is involved in the dissimilation of the intracellular 2-phosphoglycolate formed during the DNA repair of 3'-phosphoglycolate ends, a major class of DNA lesions induced by oxidative stress. This chain is Phosphoglycolate phosphatase, found in Yersinia pseudotuberculosis serotype I (strain IP32953).